A 543-amino-acid polypeptide reads, in one-letter code: Heparanase-like protein 1 (543 aa).

Residues 1-24 (MGFRVCVIVVFLGCLLLVPEKTMA) form the signal peptide. Asparagine 184 is a glycosylation site (N-linked (GlcNAc...) asparagine). The active-site Proton donor is the glutamate 201. Residue asparagine 304 is glycosylated (N-linked (GlcNAc...) asparagine). Glutamate 320 functions as the Nucleophile in the catalytic mechanism. N-linked (GlcNAc...) asparagine glycosylation is found at asparagine 425 and asparagine 428.

Belongs to the glycosyl hydrolase 79 family.

Its subcellular location is the lysosome membrane. It is found in the secreted. Endoglycosidase which is a cell surface and extracellular matrix-degrading enzyme. Cleaves heparan sulfate proteoglycans (HSPGs) into heparan sulfate side chains and core proteoglycans. In Arabidopsis thaliana (Mouse-ear cress), this protein is Heparanase-like protein 1.